The following is a 2499-amino-acid chain: Probable polyketide synthase 22 (2499 aa).

Positions 11–430 (DNQVAIVGLG…GSNACVLLSE (420 aa)) constitute a Ketosynthase family 3 (KS3) domain. Residues Cys-177, His-316, and His-354 each act as for beta-ketoacyl synthase activity in the active site. Positions 623 to 656 (GITPSIIVGHSLGEVASAFCSGMIDLETACFVIY) are acyl/malonyl transferases. The active-site For acyl/malonyl transferase activity is the Ser-633. Positions 922–1044 (APINQLGNKN…SRILMKSLDV (123 aa)) are N-terminal hotdog fold. One can recognise a PKS/mFAS DH domain in the interval 922 to 1209 (APINQLGNKN…IASTLSTKSE (288 aa)). His-956 (proton acceptor; for dehydratase activity) is an active-site residue. Positions 1059–1209 (NWSTLKREQL…IASTLSTKSE (151 aa)) are C-terminal hotdog fold. The active-site Proton donor; for dehydratase activity is Asp-1121. A Carrier domain is found at 2414–2491 (EKEFSIRQDI…QIINIVTTKV (78 aa)). Ser-2451 carries the post-translational modification O-(pantetheine 4'-phosphoryl)serine.

Requires pantetheine 4'-phosphate as cofactor.

In terms of biological role, probable polyketide synthase. This is Probable polyketide synthase 22 (pks22) from Dictyostelium discoideum (Social amoeba).